Here is a 141-residue protein sequence, read N- to C-terminus: Large ribosomal subunit protein uL16 (141 aa).

Positions 1–20 are disordered; sequence MLMPKRTKYRKQQKGRNRGK.

Belongs to the universal ribosomal protein uL16 family. As to quaternary structure, part of the 50S ribosomal subunit.

Functionally, binds 23S rRNA and is also seen to make contacts with the A and possibly P site tRNAs. In Nautilia profundicola (strain ATCC BAA-1463 / DSM 18972 / AmH), this protein is Large ribosomal subunit protein uL16.